The primary structure comprises 270 residues: Diaminopimelate epimerase (270 aa).

Residues N15, Q49, and N66 each coordinate substrate. C75 functions as the Proton donor in the catalytic mechanism. Residues 76 to 77, N155, N187, and 204 to 205 contribute to the substrate site; these read GN and ER. The active-site Proton acceptor is C213. Position 214 to 215 (214 to 215) interacts with substrate; that stretch reads GS.

It belongs to the diaminopimelate epimerase family. In terms of assembly, homodimer.

Its subcellular location is the cytoplasm. It catalyses the reaction (2S,6S)-2,6-diaminopimelate = meso-2,6-diaminopimelate. The protein operates within amino-acid biosynthesis; L-lysine biosynthesis via DAP pathway; DL-2,6-diaminopimelate from LL-2,6-diaminopimelate: step 1/1. In terms of biological role, catalyzes the stereoinversion of LL-2,6-diaminopimelate (L,L-DAP) to meso-diaminopimelate (meso-DAP), a precursor of L-lysine and an essential component of the bacterial peptidoglycan. The protein is Diaminopimelate epimerase of Rickettsia felis (strain ATCC VR-1525 / URRWXCal2) (Rickettsia azadi).